The chain runs to 279 residues: Thymidylate synthase (279 aa).

133-134 (RR) lines the dUMP pocket. The active-site Nucleophile is cysteine 154. DUMP contacts are provided by residues 178–181 (RSND), asparagine 189, and 219–221 (HIY). Aspartate 181 contributes to the (6R)-5,10-methylene-5,6,7,8-tetrahydrofolate binding site. Alanine 278 is a binding site for (6R)-5,10-methylene-5,6,7,8-tetrahydrofolate.

Belongs to the thymidylate synthase family. Bacterial-type ThyA subfamily. Homodimer.

It localises to the cytoplasm. It catalyses the reaction dUMP + (6R)-5,10-methylene-5,6,7,8-tetrahydrofolate = 7,8-dihydrofolate + dTMP. The protein operates within pyrimidine metabolism; dTTP biosynthesis. Functionally, catalyzes the reductive methylation of 2'-deoxyuridine-5'-monophosphate (dUMP) to 2'-deoxythymidine-5'-monophosphate (dTMP) while utilizing 5,10-methylenetetrahydrofolate (mTHF) as the methyl donor and reductant in the reaction, yielding dihydrofolate (DHF) as a by-product. This enzymatic reaction provides an intracellular de novo source of dTMP, an essential precursor for DNA biosynthesis. This is Thymidylate synthase from Streptococcus pneumoniae (strain 70585).